The sequence spans 224 residues: Cytidylate kinase (224 aa).

11–19 (GPAAAGKST) serves as a coordination point for ATP.

Belongs to the cytidylate kinase family. Type 1 subfamily.

It localises to the cytoplasm. It carries out the reaction CMP + ATP = CDP + ADP. It catalyses the reaction dCMP + ATP = dCDP + ADP. The protein is Cytidylate kinase of Listeria monocytogenes serovar 1/2a (strain ATCC BAA-679 / EGD-e).